The following is a 591-amino-acid chain: L-fucose isomerase (591 aa).

Residues E337 and D361 each act as proton acceptor in the active site. Mn(2+) contacts are provided by E337, D361, and H528.

The protein belongs to the L-fucose isomerase family. Homohexamer. Mn(2+) is required as a cofactor.

Its subcellular location is the cytoplasm. The catalysed reaction is L-fucose = L-fuculose. It functions in the pathway carbohydrate degradation; L-fucose degradation; L-lactaldehyde and glycerone phosphate from L-fucose: step 1/3. Converts the aldose L-fucose into the corresponding ketose L-fuculose. This chain is L-fucose isomerase, found in Salmonella paratyphi A (strain ATCC 9150 / SARB42).